Consider the following 156-residue polypeptide: 3-hydroxyacyl-[acyl-carrier-protein] dehydratase FabZ (156 aa).

Residue histidine 54 is part of the active site.

It belongs to the thioester dehydratase family. FabZ subfamily.

It is found in the cytoplasm. It carries out the reaction a (3R)-hydroxyacyl-[ACP] = a (2E)-enoyl-[ACP] + H2O. In terms of biological role, involved in unsaturated fatty acids biosynthesis. Catalyzes the dehydration of short chain beta-hydroxyacyl-ACPs and long chain saturated and unsaturated beta-hydroxyacyl-ACPs. This is 3-hydroxyacyl-[acyl-carrier-protein] dehydratase FabZ from Koribacter versatilis (strain Ellin345).